The sequence spans 540 residues: uncharacterized protein (540 aa).

Residues 1–20 (MSVSYRGPRWSSFVHVSQHS) form the signal peptide.

The protein belongs to the TP096X family.

This is an uncharacterized protein from Treponema pallidum (strain Nichols).